We begin with the raw amino-acid sequence, 927 residues long: Valine--tRNA ligase (927 aa).

Residues 45–55 (PNVTGSLHMGH) carry the 'HIGH' region motif. Residues 571-575 (KMSKS) carry the 'KMSKS' region motif. K574 lines the ATP pocket. Residues 856-917 (SLIDLAAEAA…EYRDAQDKLA (62 aa)) adopt a coiled-coil conformation.

The protein belongs to the class-I aminoacyl-tRNA synthetase family. ValS type 1 subfamily. In terms of assembly, monomer.

The protein localises to the cytoplasm. The enzyme catalyses tRNA(Val) + L-valine + ATP = L-valyl-tRNA(Val) + AMP + diphosphate. In terms of biological role, catalyzes the attachment of valine to tRNA(Val). As ValRS can inadvertently accommodate and process structurally similar amino acids such as threonine, to avoid such errors, it has a 'posttransfer' editing activity that hydrolyzes mischarged Thr-tRNA(Val) in a tRNA-dependent manner. This chain is Valine--tRNA ligase, found in Mesorhizobium japonicum (strain LMG 29417 / CECT 9101 / MAFF 303099) (Mesorhizobium loti (strain MAFF 303099)).